The chain runs to 354 residues: Chorismate synthase (354 aa).

Arg-46 serves as a coordination point for NADP(+). Residues 123–125 (RVS), 233–234 (NG), Gly-273, 288–292 (KPTPS), and Arg-314 contribute to the FMN site.

The protein belongs to the chorismate synthase family. In terms of assembly, homotetramer. FMNH2 serves as cofactor.

It catalyses the reaction 5-O-(1-carboxyvinyl)-3-phosphoshikimate = chorismate + phosphate. The protein operates within metabolic intermediate biosynthesis; chorismate biosynthesis; chorismate from D-erythrose 4-phosphate and phosphoenolpyruvate: step 7/7. Its function is as follows. Catalyzes the anti-1,4-elimination of the C-3 phosphate and the C-6 proR hydrogen from 5-enolpyruvylshikimate-3-phosphate (EPSP) to yield chorismate, which is the branch point compound that serves as the starting substrate for the three terminal pathways of aromatic amino acid biosynthesis. This reaction introduces a second double bond into the aromatic ring system. This is Chorismate synthase from Campylobacter curvus (strain 525.92).